A 314-amino-acid polypeptide reads, in one-letter code: 4-hydroxy-3-methylbut-2-enyl diphosphate reductase (314 aa).

Cys-12 is a binding site for [4Fe-4S] cluster. Residues His-41 and His-74 each coordinate (2E)-4-hydroxy-3-methylbut-2-enyl diphosphate. Positions 41 and 74 each coordinate dimethylallyl diphosphate. His-41 and His-74 together coordinate isopentenyl diphosphate. Cys-96 provides a ligand contact to [4Fe-4S] cluster. His-124 lines the (2E)-4-hydroxy-3-methylbut-2-enyl diphosphate pocket. Residue His-124 participates in dimethylallyl diphosphate binding. His-124 is a binding site for isopentenyl diphosphate. Glu-126 (proton donor) is an active-site residue. Thr-168 serves as a coordination point for (2E)-4-hydroxy-3-methylbut-2-enyl diphosphate. Cys-198 lines the [4Fe-4S] cluster pocket. Positions 226, 227, 228, and 270 each coordinate (2E)-4-hydroxy-3-methylbut-2-enyl diphosphate. The dimethylallyl diphosphate site is built by Ser-226, Ser-227, Asn-228, and Ser-270. Isopentenyl diphosphate contacts are provided by Ser-226, Ser-227, Asn-228, and Ser-270.

It belongs to the IspH family. It depends on [4Fe-4S] cluster as a cofactor.

It catalyses the reaction isopentenyl diphosphate + 2 oxidized [2Fe-2S]-[ferredoxin] + H2O = (2E)-4-hydroxy-3-methylbut-2-enyl diphosphate + 2 reduced [2Fe-2S]-[ferredoxin] + 2 H(+). It carries out the reaction dimethylallyl diphosphate + 2 oxidized [2Fe-2S]-[ferredoxin] + H2O = (2E)-4-hydroxy-3-methylbut-2-enyl diphosphate + 2 reduced [2Fe-2S]-[ferredoxin] + 2 H(+). Its pathway is isoprenoid biosynthesis; dimethylallyl diphosphate biosynthesis; dimethylallyl diphosphate from (2E)-4-hydroxy-3-methylbutenyl diphosphate: step 1/1. It participates in isoprenoid biosynthesis; isopentenyl diphosphate biosynthesis via DXP pathway; isopentenyl diphosphate from 1-deoxy-D-xylulose 5-phosphate: step 6/6. In terms of biological role, catalyzes the conversion of 1-hydroxy-2-methyl-2-(E)-butenyl 4-diphosphate (HMBPP) into a mixture of isopentenyl diphosphate (IPP) and dimethylallyl diphosphate (DMAPP). Acts in the terminal step of the DOXP/MEP pathway for isoprenoid precursor biosynthesis. The chain is 4-hydroxy-3-methylbut-2-enyl diphosphate reductase from Pseudomonas aeruginosa (strain LESB58).